Reading from the N-terminus, the 241-residue chain is Endonuclease NucS (241 aa).

Belongs to the NucS endonuclease family.

It is found in the cytoplasm. In terms of biological role, cleaves both 3' and 5' ssDNA extremities of branched DNA structures. This chain is Endonuclease NucS, found in Corynebacterium jeikeium (strain K411).